Reading from the N-terminus, the 180-residue chain is Adenine phosphoribosyltransferase (180 aa).

Alanine 2 carries the post-translational modification N-acetylalanine. Phosphoserine is present on residues serine 15 and serine 30. Position 60 is a phosphotyrosine (tyrosine 60). Phosphoserine is present on serine 66. Residue threonine 135 is modified to Phosphothreonine.

The protein belongs to the purine/pyrimidine phosphoribosyltransferase family. As to quaternary structure, homodimer.

Its subcellular location is the cytoplasm. The enzyme catalyses AMP + diphosphate = 5-phospho-alpha-D-ribose 1-diphosphate + adenine. It participates in purine metabolism; AMP biosynthesis via salvage pathway; AMP from adenine: step 1/1. Catalyzes a salvage reaction resulting in the formation of AMP, that is energically less costly than de novo synthesis. The protein is Adenine phosphoribosyltransferase of Bos taurus (Bovine).